Here is a 318-residue protein sequence, read N- to C-terminus: Transaldolase (318 aa).

Lys132 functions as the Schiff-base intermediate with substrate in the catalytic mechanism.

The protein belongs to the transaldolase family. Type 1 subfamily. As to quaternary structure, homodimer.

It localises to the cytoplasm. The enzyme catalyses D-sedoheptulose 7-phosphate + D-glyceraldehyde 3-phosphate = D-erythrose 4-phosphate + beta-D-fructose 6-phosphate. Its pathway is carbohydrate degradation; pentose phosphate pathway; D-glyceraldehyde 3-phosphate and beta-D-fructose 6-phosphate from D-ribose 5-phosphate and D-xylulose 5-phosphate (non-oxidative stage): step 2/3. Its function is as follows. Transaldolase is important for the balance of metabolites in the pentose-phosphate pathway. The sequence is that of Transaldolase from Shewanella sp. (strain MR-4).